The following is a 155-amino-acid chain: 6,7-dimethyl-8-ribityllumazine synthase (155 aa).

Residues Trp18, 52–54 (AFE), and 76–78 (LVV) each bind 5-amino-6-(D-ribitylamino)uracil. The active-site Proton donor is Arg84. 5-amino-6-(D-ribitylamino)uracil is bound at residue Ser109. Position 123 (His123) interacts with (2S)-2-hydroxy-3-oxobutyl phosphate.

Belongs to the DMRL synthase family.

It catalyses the reaction (2S)-2-hydroxy-3-oxobutyl phosphate + 5-amino-6-(D-ribitylamino)uracil = 6,7-dimethyl-8-(1-D-ribityl)lumazine + phosphate + 2 H2O + H(+). It functions in the pathway cofactor biosynthesis; riboflavin biosynthesis; riboflavin from 2-hydroxy-3-oxobutyl phosphate and 5-amino-6-(D-ribitylamino)uracil: step 1/2. Catalyzes the formation of 6,7-dimethyl-8-ribityllumazine by condensation of 5-amino-6-(D-ribitylamino)uracil with 3,4-dihydroxy-2-butanone 4-phosphate. This is the penultimate step in the biosynthesis of riboflavin. The chain is 6,7-dimethyl-8-ribityllumazine synthase from Rhodococcus erythropolis (Arthrobacter picolinophilus).